The sequence spans 359 residues: Protein Wnt-9b (359 aa).

A signal peptide spans 1–23 (MRPAPALALAALCLLVLPAAAAA). Disulfide bonds link Cys-91–Cys-102, Cys-137–Cys-145, Cys-147–Cys-164, Cys-212–Cys-226, Cys-214–Cys-221, Cys-293–Cys-318, Cys-307–Cys-313, Cys-317–Cys-357, Cys-333–Cys-348, Cys-335–Cys-345, and Cys-340–Cys-341. A glycan (N-linked (GlcNAc...) asparagine) is linked at Asn-101. The O-palmitoleoyl serine; by PORCN moiety is linked to residue Ser-218.

This sequence belongs to the Wnt family. In terms of assembly, forms a soluble 1:1 complex with AFM; this prevents oligomerization and is required for prolonged biological activity. The complex with AFM may represent the physiological form in body fluids. Component of the Wnt-Fzd-LRP5-LRP6 signaling complex that contains a WNT protein, a FZD protein and LRP5 or LRP6. Interacts directly in the complex with LRP6. Interacts with PKD1 (via extracellular domain). Post-translationally, palmitoleoylation is required for efficient binding to frizzled receptors. Depalmitoleoylation leads to Wnt signaling pathway inhibition.

It is found in the secreted. The protein resides in the extracellular space. The protein localises to the extracellular matrix. Its function is as follows. Ligand for members of the frizzled family of seven transmembrane receptors. Functions in the canonical Wnt/beta-catenin signaling pathway. Required for normal embryonic kidney development, and for normal development of the urogenital tract, including uterus and part of the oviduct and the upper vagina in females, and epididymis and vas deferens in males. Activates a signaling cascade in the metanephric mesenchyme that induces tubulogenesis. Acts upstream of WNT4 in the signaling pathways that mediate development of kidney tubules and the Muellerian ducts. Plays a role in cranofacial development and is required for normal fusion of the palate during embryonic development. This chain is Protein Wnt-9b (Wnt9b), found in Mus musculus (Mouse).